The chain runs to 176 residues: Nascent polypeptide-associated complex subunit alpha (176 aa).

The region spanning 16–80 (PKNEKKAREL…AKVDDMNQRI (65 aa)) is the NAC-A/B domain. A disordered region spans residues 83 to 110 (AQAAQAAETDAHAGHTHSHGEEDKSPEA). A compositionally biased stretch (basic and acidic residues) spans 91–110 (TDAHAGHTHSHGEEDKSPEA). Residues 138-175 (LDAKDIDIIVEQTQVSRAKAVKALRKHDGDMVNAIMEL) form the UBA domain.

It belongs to the NAC-alpha family. Part of the nascent polypeptide-associated complex (NAC), consisting of EGD2 and EGD1. NAC associates with ribosomes via EGD1.

The protein resides in the cytoplasm. The protein localises to the nucleus. Functionally, component of the nascent polypeptide-associated complex (NAC), a dynamic component of the ribosomal exit tunnel, protecting the emerging polypeptides from interaction with other cytoplasmic proteins to ensure appropriate nascent protein targeting. The NAC complex also promotes mitochondrial protein import by enhancing productive ribosome interactions with the outer mitochondrial membrane and blocks the inappropriate interaction of ribosomes translating non-secretory nascent polypeptides with translocation sites in the membrane of the endoplasmic reticulum. EGD2 may also be involved in transcription regulation. The polypeptide is Nascent polypeptide-associated complex subunit alpha (EGD2) (Scheffersomyces stipitis (strain ATCC 58785 / CBS 6054 / NBRC 10063 / NRRL Y-11545) (Yeast)).